Here is a 239-residue protein sequence, read N- to C-terminus: MQDPNADTEWNDILRKKGILPPKETPVEEEEDEQLHLQSQSVVKTYEDMTLEELEENEDEFSEEDEHAMEMYRLKRLAEWKANQMKNVFGELKEISGQDYVQEVNKAGEGIWVVLHLYKQGIPLCSLINQHLAQLARKFPQSKFLKSISSTCIPNYPDRNLPTLFVYRDGEMKAQFIGPLVFGGMNLTCDELEWRLSESGAVKTDLEENPRKQIQDQLMTSIRCSANTHRDGEEDSDED.

The interval 16 to 37 (KKGILPPKETPVEEEEDEQLHL) is disordered. Positions 28–201 (EEEEDEQLHL…LEWRLSESGA (174 aa)) constitute a Phosducin domain. Phosphoserine is present on S41. Residues 89–239 (FGELKEISGQ…RDGEEDSDED (151 aa)) form a thioredoxin fold region. The segment covering 217–227 (QLMTSIRCSAN) has biased composition (polar residues). The disordered stretch occupies residues 217–239 (QLMTSIRCSANTHRDGEEDSDED).

This sequence belongs to the phosducin family. As to quaternary structure, interacts (via thioredoxin fold region) with kdr/vegfr2 (via juxtamembrane domain). As to expression, expressed in endothelial cells.

It localises to the cytoplasm. The protein resides in the perinuclear region. It is found in the endoplasmic reticulum. Acts as a chaperone for the angiogenic VEGF receptor KDR/VEGFR2, increasing its abundance by inhibiting its ubiquitination and degradation. Inhibits the folding activity of the chaperonin-containing T-complex (CCT) which leads to inhibition of cytoskeletal actin folding. Acts as a chaperone during heat shock alongside HSP90 and HSP40/70 chaperone complexes. Modulates the activation of caspases during apoptosis. In Danio rerio (Zebrafish), this protein is Phosducin-like protein 3.